Here is a 155-residue protein sequence, read N- to C-terminus: Leader peptidase HopD (155 aa).

This sequence belongs to the peptidase A24 family.

The polypeptide is Leader peptidase HopD (hopD) (Escherichia coli).